Here is a 467-residue protein sequence, read N- to C-terminus: Putative odorant receptor 85e (467 aa).

The Cytoplasmic segment spans residues 1–60 (MASLQFHGNVDADIRYDISLDPARESNLFRLLMGLQLANGTKPSPRLPKWWPKRLEMIGK). The chain crosses the membrane as a helical span at residues 61–81 (VLPKAYCSMVIFTSLHLGVLF). Topologically, residues 82 to 98 (TKTTLDVLPTGELQAIT) are extracellular. A helical transmembrane segment spans residues 99-119 (DALTMTIIYFFTGYGTIYWCL). Residues 120 to 159 (RSRRLLAYMEHMNREYRHHSLAGVTFVSSHAAFRMSRNFT) lie on the Cytoplasmic side of the membrane. Residues 160 to 180 (VVWIMSCLLGVISWGVSPLML) traverse the membrane as a helical segment. Residues 181-212 (GIRMLPLQCWYPFDALGPGTYTAVYATQLFGQ) lie on the Extracellular side of the membrane. The helical transmembrane segment at 213–233 (IMVGMTFGFGGSLFVTLSLLL) threads the bilayer. The Cytoplasmic segment spans residues 234–286 (LGQFDVLYCSLKNLDAHTKLLGGESVNGLSSLQEELLLGDSKRELNQYVLLQE). The chain crosses the membrane as a helical span at residues 287–307 (HPTDLLRLSAGRKCPDQGNAF). The Extracellular segment spans residues 308–334 (HNALVECIRLHRFILHCSQELENLFSP). The chain crosses the membrane as a helical span at residues 335–355 (YCLVKSLQITFQLCLLVFVGV). The Cytoplasmic portion of the chain corresponds to 356–367 (SGTREVLRIVNQ). Residues 368-388 (LQYLGLTIFELLMFTYCGELL) traverse the membrane as a helical segment. At 389–467 (SRHSIRSGDA…LAAKKTESEL (79 aa)) the chain is on the extracellular side.

It belongs to the insect chemoreceptor superfamily. Heteromeric odorant receptor channel (TC 1.A.69) family. Or2a subfamily. Interacts with Orco. Complexes exist early in the endomembrane system in olfactory sensory neurons (OSNs), coupling these complexes to the conserved ciliary trafficking pathway. As to expression, expressed in 15% of the 120 sensory neurons within the maxillary palp.

The protein resides in the cell membrane. Odorant receptor which mediates acceptance or avoidance behavior, depending on its substrates. The odorant receptor repertoire encodes a large collection of odor stimuli that vary widely in identity, intensity, and duration. May form a complex with Orco to form odorant-sensing units, providing sensitive and prolonged odorant signaling and calcium permeability. This is Putative odorant receptor 85e (Or85e) from Drosophila melanogaster (Fruit fly).